A 273-amino-acid polypeptide reads, in one-letter code: L-fucose dehydrogenase (273 aa).

NAD(+)-binding residues include R19, I21, D40, K41, D62, V63, N89, Y154, K158, I187, T189, and L191. Y154 acts as the Proton acceptor in catalysis.

Belongs to the short-chain dehydrogenases/reductases (SDR) family. Homotetramer.

It is found in the cytoplasm. The enzyme catalyses L-fucose + NAD(+) = L-fucono-1,5-lactone + NADH + H(+). The catalysed reaction is D-arabinose + NAD(+) = D-arabinono-1,5-lactone + NADH + H(+). It catalyses the reaction L-galactose + NAD(+) = L-galactono-1,5-lactone + NADH + H(+). It functions in the pathway carbohydrate degradation; L-fucose degradation. Functionally, catalyzes the NAD(+)-dependent oxidation of L-fucose, yielding L-fucono-1,5-lactone, which rapidly converts spontaneously to L-fucone-1,4-lactone. Can also act on D-arabinose and L-galactose, with lower catalytic efficiency. Does not use NADPH. May be the initial enzyme of the putative L-fucose degradation pathway in mammals. The polypeptide is L-fucose dehydrogenase (Mus musculus (Mouse)).